The chain runs to 413 residues: Serine hydroxymethyltransferase (413 aa).

Residues L115 and 119–121 contribute to the (6S)-5,6,7,8-tetrahydrofolate site; that span reads GHL. At K224 the chain carries N6-(pyridoxal phosphate)lysine.

It belongs to the SHMT family. Homodimer. The cofactor is pyridoxal 5'-phosphate.

It is found in the cytoplasm. The enzyme catalyses (6R)-5,10-methylene-5,6,7,8-tetrahydrofolate + glycine + H2O = (6S)-5,6,7,8-tetrahydrofolate + L-serine. The protein operates within one-carbon metabolism; tetrahydrofolate interconversion. It participates in amino-acid biosynthesis; glycine biosynthesis; glycine from L-serine: step 1/1. Catalyzes the reversible interconversion of serine and glycine with tetrahydrofolate (THF) serving as the one-carbon carrier. This reaction serves as the major source of one-carbon groups required for the biosynthesis of purines, thymidylate, methionine, and other important biomolecules. Also exhibits THF-independent aldolase activity toward beta-hydroxyamino acids, producing glycine and aldehydes, via a retro-aldol mechanism. This chain is Serine hydroxymethyltransferase, found in Mycoplasma capricolum subsp. capricolum (strain California kid / ATCC 27343 / NCTC 10154).